Consider the following 565-residue polypeptide: Hemagglutinin-neuraminidase (565 aa).

Residues 1–19 are Intravirion-facing; it reads MVAEDAPVRATCRVLFRTT. The chain crosses the membrane as a helical span at residues 20–40; it reads TLIFLCTLLALSISILYESLI. Residues 41–565 are Virion surface-facing; it reads TQKQIMSQAG…VPFIRQVTLS (525 aa). Residue Asn139 is glycosylated (N-linked (GlcNAc...) asparagine; by host). 3 cysteine pairs are disulfide-bonded: Cys161/Cys185, Cys175/Cys236, and Cys227/Cys240. Positions 223 to 228 are involved in neuraminidase activity; that stretch reads NRKSCS. Asn267 is a glycosylation site (N-linked (GlcNAc...) asparagine; by host). Disulfide bonds link Cys333-Cys454, Cys365-Cys375, and Cys448-Cys458. N-linked (GlcNAc...) asparagine; by host glycosylation occurs at Asn504. A disulfide bridge links Cys528 with Cys539.

The protein belongs to the paramyxoviruses hemagglutinin-neuraminidase family. In terms of assembly, homotetramer; composed of disulfide-linked homodimers. Interacts with F protein trimer.

It localises to the virion membrane. It is found in the host cell membrane. The enzyme catalyses Hydrolysis of alpha-(2-&gt;3)-, alpha-(2-&gt;6)-, alpha-(2-&gt;8)- glycosidic linkages of terminal sialic acid residues in oligosaccharides, glycoproteins, glycolipids, colominic acid and synthetic substrates.. Functionally, attaches the virus to sialic acid-containing cell receptors and thereby initiating infection. Binding of HN protein to the receptor induces a conformational change that allows the F protein to trigger virion/cell membranes fusion. Its function is as follows. Neuraminidase activity ensures the efficient spread of the virus by dissociating the mature virions from the neuraminic acid containing glycoproteins. The sequence is that of Hemagglutinin-neuraminidase (HN) from Canis lupus familiaris (Dog).